Reading from the N-terminus, the 335-residue chain is Glycerol-3-phosphate dehydrogenase [NAD(P)+] (335 aa).

Ser10, Phe11, Arg31, and Lys105 together coordinate NADPH. Positions 105, 136, and 138 each coordinate sn-glycerol 3-phosphate. Ala140 contacts NADPH. Lys191, Asp244, Ser254, Arg255, and Asn256 together coordinate sn-glycerol 3-phosphate. Lys191 (proton acceptor) is an active-site residue. Arg255 contributes to the NADPH binding site. The NADPH site is built by Val279 and Glu281.

It belongs to the NAD-dependent glycerol-3-phosphate dehydrogenase family.

The protein resides in the cytoplasm. The catalysed reaction is sn-glycerol 3-phosphate + NAD(+) = dihydroxyacetone phosphate + NADH + H(+). It catalyses the reaction sn-glycerol 3-phosphate + NADP(+) = dihydroxyacetone phosphate + NADPH + H(+). It participates in membrane lipid metabolism; glycerophospholipid metabolism. Catalyzes the reduction of the glycolytic intermediate dihydroxyacetone phosphate (DHAP) to sn-glycerol 3-phosphate (G3P), the key precursor for phospholipid synthesis. This Leptospira interrogans serogroup Icterohaemorrhagiae serovar Lai (strain 56601) protein is Glycerol-3-phosphate dehydrogenase [NAD(P)+].